The primary structure comprises 236 residues: Ubiquinone biosynthesis O-methyltransferase (236 aa).

S-adenosyl-L-methionine contacts are provided by Arg-39, Gly-59, Asp-80, and Met-124.

This sequence belongs to the methyltransferase superfamily. UbiG/COQ3 family.

It carries out the reaction a 3-demethylubiquinol + S-adenosyl-L-methionine = a ubiquinol + S-adenosyl-L-homocysteine + H(+). It catalyses the reaction a 3-(all-trans-polyprenyl)benzene-1,2-diol + S-adenosyl-L-methionine = a 2-methoxy-6-(all-trans-polyprenyl)phenol + S-adenosyl-L-homocysteine + H(+). It functions in the pathway cofactor biosynthesis; ubiquinone biosynthesis. Its function is as follows. O-methyltransferase that catalyzes the 2 O-methylation steps in the ubiquinone biosynthetic pathway. The chain is Ubiquinone biosynthesis O-methyltransferase from Pseudoalteromonas translucida (strain TAC 125).